The chain runs to 323 residues: MKNQSSFSIVALLLIFFSSSVFAQLQTNFYRKSCPNVETIVRNAVRQKFQQTFVTAPATLRLFFHDCFVRGCDASILLASPSEKDHPDDKSLAGDGFDTVAKAKQALDRDPNCRNKVSCADILALATRDVVVLTGGPNYPVELGRRDGRLSTVASVQHSLPQPSFKLDQLNTMFARHGLSQTDMIALSGAHTIGFAHCGKFSKRIYNFSPKRPIDPTLNIRYALQLRQMCPIRVDLRIAINMDPTSPNTFDNAYFKNLQKGMGLFTSDQVLFSDERSRSTVNSFASSEATFRQAFISAITKLGRVGVKTGNAGEIRRDCSRVN.

A signal peptide spans 1 to 23 (MKNQSSFSIVALLLIFFSSSVFA). 4 disulfide bridges follow: cysteine 34–cysteine 113, cysteine 67–cysteine 72, cysteine 119–cysteine 319, and cysteine 198–cysteine 230. Residue histidine 65 is the Proton acceptor of the active site. 5 residues coordinate Ca(2+): aspartate 66, valine 69, glycine 71, aspartate 73, and serine 75. Proline 161 serves as a coordination point for substrate. Position 191 (histidine 191) interacts with heme b. Threonine 192 contributes to the Ca(2+) binding site. Ca(2+)-binding residues include aspartate 243, serine 246, and aspartate 251.

The protein belongs to the peroxidase family. Classical plant (class III) peroxidase subfamily. Heme b serves as cofactor. Requires Ca(2+) as cofactor. As to expression, expressed in the whole plant, but preferentially in roots and leaves.

Its subcellular location is the secreted. It catalyses the reaction 2 a phenolic donor + H2O2 = 2 a phenolic radical donor + 2 H2O. Its function is as follows. Removal of H(2)O(2), oxidation of toxic reductants, biosynthesis and degradation of lignin, suberization, auxin catabolism, response to environmental stresses such as wounding, pathogen attack and oxidative stress. These functions might be dependent on each isozyme/isoform in each plant tissue. The protein is Peroxidase 16 (PER16) of Arabidopsis thaliana (Mouse-ear cress).